The following is a 495-amino-acid chain: Cytochrome P450 Tp4149 (495 aa).

The next 2 membrane-spanning stretches (helical) occupy residues 4–24 (ILSL…MFFI) and 208–228 (YLSM…SWVD). A glycan (N-linked (GlcNAc...) asparagine) is linked at Asn419. Cys437 provides a ligand contact to heme.

The protein belongs to the cytochrome P450 family. Heme serves as cofactor.

It is found in the membrane. The protein operates within secondary metabolite biosynthesis; terpenoid biosynthesis. In terms of biological role, probably involved in the biosynthesis of germacrene-derived sesquiterpene lactones. The protein is Cytochrome P450 Tp4149 of Tanacetum parthenium (Feverfew).